The sequence spans 290 residues: Ribosomal RNA small subunit methyltransferase A (290 aa).

S-adenosyl-L-methionine-binding residues include N27, L29, G54, E75, D100, and N125.

Belongs to the class I-like SAM-binding methyltransferase superfamily. rRNA adenine N(6)-methyltransferase family. RsmA subfamily.

It is found in the cytoplasm. The catalysed reaction is adenosine(1518)/adenosine(1519) in 16S rRNA + 4 S-adenosyl-L-methionine = N(6)-dimethyladenosine(1518)/N(6)-dimethyladenosine(1519) in 16S rRNA + 4 S-adenosyl-L-homocysteine + 4 H(+). In terms of biological role, specifically dimethylates two adjacent adenosines (A1518 and A1519) in the loop of a conserved hairpin near the 3'-end of 16S rRNA in the 30S particle. May play a critical role in biogenesis of 30S subunits. In Streptococcus thermophilus (strain ATCC BAA-250 / LMG 18311), this protein is Ribosomal RNA small subunit methyltransferase A.